Reading from the N-terminus, the 527-residue chain is Peptidoglycan O-acetyltransferase (527 aa).

The next 11 membrane-spanning stretches (helical) occupy residues 11–31 (VFVL…VGFL), 55–75 (LFFY…SIVF), 96–116 (LILG…TDFF), 131–151 (LHLI…AYLM), 187–207 (HFLD…GPIV), 228–248 (NIAL…VIAD), 280–300 (LYFD…FFNI), 352–372 (LILV…FIIW), 397–417 (MPKI…WVFF), 463–483 (IMYA…SFCL), and 505–525 (LLLS…FLYF). Histidine 363 is an active-site residue.

It belongs to the membrane-bound acyltransferase family.

The protein resides in the cell membrane. Catalyzes the O-acetylation of peptidoglycan (PG), an important mechanism that appears to confer lysozyme resistance and contributes to pathogen persistence in the host. The polypeptide is Peptidoglycan O-acetyltransferase (patA) (Helicobacter pylori (strain ATCC 700392 / 26695) (Campylobacter pylori)).